The chain runs to 83 residues: Small ribosomal subunit protein bS16 (83 aa).

It belongs to the bacterial ribosomal protein bS16 family.

The polypeptide is Small ribosomal subunit protein bS16 (Pseudomonas aeruginosa (strain UCBPP-PA14)).